The following is a 136-amino-acid chain: ATP synthase epsilon chain (136 aa).

Belongs to the ATPase epsilon chain family. As to quaternary structure, F-type ATPases have 2 components, CF(1) - the catalytic core - and CF(0) - the membrane proton channel. CF(1) has five subunits: alpha(3), beta(3), gamma(1), delta(1), epsilon(1). CF(0) has three main subunits: a, b and c.

It is found in the cell membrane. Its function is as follows. Produces ATP from ADP in the presence of a proton gradient across the membrane. The protein is ATP synthase epsilon chain of Herpetosiphon aurantiacus (strain ATCC 23779 / DSM 785 / 114-95).